The sequence spans 499 residues: Glutamyl-tRNA(Gln) amidotransferase subunit A (499 aa).

Residues K79 and S159 each act as charge relay system in the active site. The Acyl-ester intermediate role is filled by S183.

This sequence belongs to the amidase family. GatA subfamily. In terms of assembly, heterotrimer of A, B and C subunits.

The catalysed reaction is L-glutamyl-tRNA(Gln) + L-glutamine + ATP + H2O = L-glutaminyl-tRNA(Gln) + L-glutamate + ADP + phosphate + H(+). Its function is as follows. Allows the formation of correctly charged Gln-tRNA(Gln) through the transamidation of misacylated Glu-tRNA(Gln) in organisms which lack glutaminyl-tRNA synthetase. The reaction takes place in the presence of glutamine and ATP through an activated gamma-phospho-Glu-tRNA(Gln). This chain is Glutamyl-tRNA(Gln) amidotransferase subunit A, found in Granulibacter bethesdensis (strain ATCC BAA-1260 / CGDNIH1).